A 482-amino-acid polypeptide reads, in one-letter code: Anaerobic nitric oxide reductase flavorubredoxin (482 aa).

Positions 30–210 (LRGSSYNSYL…PFSRLVTPKI (181 aa)) are zinc metallo-hydrolase. His79, Glu81, Asp83, His147, Asp166, and His227 together coordinate Fe cation. The 140-residue stretch at 254–393 (ITIFYDTMSN…LCRQHGRDIA (140 aa)) folds into the Flavodoxin-like domain. FMN-binding positions include 260-264 (TMSNN) and 342-369 (AFGSHGWSGGAVDRLSTRLQDAGFEMSL). Residues 426 to 477 (GPSMQCSVCQWIYDPAKGEPLQDVAPGTPWSDVPDNFLCPECSLGKDVFDVL) form the Rubredoxin-like domain. Residues Cys431, Cys434, Cys464, and Cys467 each contribute to the Fe cation site.

The protein in the N-terminal section; belongs to the zinc metallo-hydrolase group 3 family. As to quaternary structure, homotetramer. Fe cation serves as cofactor. It depends on FMN as a cofactor.

It localises to the cytoplasm. The protein operates within nitrogen metabolism; nitric oxide reduction. Its function is as follows. Anaerobic nitric oxide reductase; uses NADH to detoxify nitric oxide (NO), protecting several 4Fe-4S NO-sensitive enzymes. Has at least 2 reductase partners, only one of which (NorW, flavorubredoxin reductase) has been identified. NO probably binds to the di-iron center; electrons enter from the NorW at rubredoxin and are transferred sequentially to the FMN center and the di-iron center. Also able to function as an aerobic oxygen reductase. The chain is Anaerobic nitric oxide reductase flavorubredoxin from Citrobacter koseri (strain ATCC BAA-895 / CDC 4225-83 / SGSC4696).